Reading from the N-terminus, the 427-residue chain is Serine hydroxymethyltransferase (427 aa).

(6S)-5,6,7,8-tetrahydrofolate is bound by residues Leu-122 and Gly-126–Leu-128. The residue at position 231 (Lys-231) is an N6-(pyridoxal phosphate)lysine. (6S)-5,6,7,8-tetrahydrofolate is bound by residues Glu-247 and Ser-355–Phe-357.

Belongs to the SHMT family. As to quaternary structure, homodimer. Requires pyridoxal 5'-phosphate as cofactor.

It is found in the cytoplasm. The catalysed reaction is (6R)-5,10-methylene-5,6,7,8-tetrahydrofolate + glycine + H2O = (6S)-5,6,7,8-tetrahydrofolate + L-serine. Its pathway is one-carbon metabolism; tetrahydrofolate interconversion. The protein operates within amino-acid biosynthesis; glycine biosynthesis; glycine from L-serine: step 1/1. Functionally, catalyzes the reversible interconversion of serine and glycine with tetrahydrofolate (THF) serving as the one-carbon carrier. This reaction serves as the major source of one-carbon groups required for the biosynthesis of purines, thymidylate, methionine, and other important biomolecules. Also exhibits THF-independent aldolase activity toward beta-hydroxyamino acids, producing glycine and aldehydes, via a retro-aldol mechanism. In Synechocystis sp. (strain ATCC 27184 / PCC 6803 / Kazusa), this protein is Serine hydroxymethyltransferase.